Consider the following 344-residue polypeptide: Succinylglutamate desuccinylase (344 aa).

Zn(2+)-binding residues include His63, Glu66, and His160. Residue Glu224 is part of the active site.

The protein belongs to the AspA/AstE family. Succinylglutamate desuccinylase subfamily. Zn(2+) serves as cofactor.

It catalyses the reaction N-succinyl-L-glutamate + H2O = L-glutamate + succinate. The protein operates within amino-acid degradation; L-arginine degradation via AST pathway; L-glutamate and succinate from L-arginine: step 5/5. Its function is as follows. Transforms N(2)-succinylglutamate into succinate and glutamate. The polypeptide is Succinylglutamate desuccinylase (Shewanella baltica (strain OS223)).